The primary structure comprises 344 residues: Protein RecA (344 aa).

65 to 72 (GPESSGKT) is an ATP binding site.

The protein belongs to the RecA family.

The protein localises to the cytoplasm. Can catalyze the hydrolysis of ATP in the presence of single-stranded DNA, the ATP-dependent uptake of single-stranded DNA by duplex DNA, and the ATP-dependent hybridization of homologous single-stranded DNAs. It interacts with LexA causing its activation and leading to its autocatalytic cleavage. In Rubrobacter xylanophilus (strain DSM 9941 / JCM 11954 / NBRC 16129 / PRD-1), this protein is Protein RecA.